Here is a 511-residue protein sequence, read N- to C-terminus: Cytochrome P450 705A5 (511 aa).

Residues 12–30 (CFIFLLLCLFSRLSYDLFF) form a helical membrane-spanning segment. Cysteine 454 serves as a coordination point for heme.

This sequence belongs to the cytochrome P450 family. Requires heme as cofactor. As to expression, expressed primarily in the root epidermis.

It is found in the membrane. Functionally, converts thalian-diol to a desaturated thalian-diol. In Arabidopsis thaliana (Mouse-ear cress), this protein is Cytochrome P450 705A5 (CYP705A5).